The primary structure comprises 296 residues: NAD kinase (296 aa).

The active-site Proton acceptor is the Asp72. Residues 72–73, 146–147, Arg157, Lys174, Asp176, 187–192, and Gln247 contribute to the NAD(+) site; these read DG, ND, and TAYALS.

This sequence belongs to the NAD kinase family. The cofactor is a divalent metal cation.

Its subcellular location is the cytoplasm. It carries out the reaction NAD(+) + ATP = ADP + NADP(+) + H(+). Functionally, involved in the regulation of the intracellular balance of NAD and NADP, and is a key enzyme in the biosynthesis of NADP. Catalyzes specifically the phosphorylation on 2'-hydroxyl of the adenosine moiety of NAD to yield NADP. The chain is NAD kinase from Pseudomonas putida (strain ATCC 700007 / DSM 6899 / JCM 31910 / BCRC 17059 / LMG 24140 / F1).